The sequence spans 131 residues: UPF0102 protein YraN (131 aa).

A compositionally biased stretch (polar residues) spans 1 to 19 (MATVPTRSGSPRQLTTKQT). The segment at 1 to 21 (MATVPTRSGSPRQLTTKQTGD) is disordered.

Belongs to the UPF0102 family.

This chain is UPF0102 protein YraN, found in Shigella flexneri serotype 5b (strain 8401).